The sequence spans 296 residues: Chronophin (296 aa).

Catalysis depends on D25, which acts as the Nucleophile. Residues D25 and D27 each contribute to the Mg(2+) site. Residue D27 is the Proton donor of the active site. Residues 58–60, H182, and K213 each bind substrate; that span reads SNN. Position 238 (D238) interacts with Mg(2+).

It belongs to the HAD-like hydrolase superfamily. Homodimer. Mg(2+) serves as cofactor. Ubiquitously expressed (at protein level). Highly expressed in all the regions of central nerve system except the spinal cord. Also expressed at high level in liver and testis. In fetus, it is weakly expressed in all organs except brain.

It localises to the cytoplasm. Its subcellular location is the cytosol. The protein resides in the cytoskeleton. It is found in the cell projection. The protein localises to the ruffle membrane. It localises to the lamellipodium membrane. Its subcellular location is the cell membrane. It carries out the reaction pyridoxal 5'-phosphate + H2O = pyridoxal + phosphate. It catalyses the reaction pyridoxine 5'-phosphate + H2O = pyridoxine + phosphate. The catalysed reaction is pyridoxamine + phosphate = pyridoxamine 5'-phosphate + H2O. The enzyme catalyses O-phospho-L-seryl-[protein] + H2O = L-seryl-[protein] + phosphate. With respect to regulation, inhibited by NaF, Zn(2+), Ca(2+), Mn(2+) and EDTA. Functions as a pyridoxal phosphate (PLP) phosphatase, which also catalyzes the dephosphorylation of pyridoxine 5'-phosphate (PNP) and pyridoxamine 5'-phosphate (PMP), with order of substrate preference PLP &gt; PNP &gt; PMP and therefore plays a role in vitamin B6 metabolism. Also functions as a protein serine phosphatase that specifically dephosphorylates 'Ser-3' in proteins of the actin-depolymerizing factor (ADF)/cofilin family like CFL1 and DSTN. Thereby, regulates cofilin-dependent actin cytoskeleton reorganization, being required for normal progress through mitosis and normal cytokinesis. Does not dephosphorylate phosphothreonines in LIMK1. Does not dephosphorylate peptides containing phosphotyrosine. This chain is Chronophin, found in Homo sapiens (Human).